Consider the following 473-residue polypeptide: Photosystem II CP43 reaction center protein (473 aa).

Residues 1 to 14 (MKTLYSPRRFYPVE) constitute a propeptide that is removed on maturation. T15 bears the N-acetylthreonine mark. Phosphothreonine is present on T15. 5 helical membrane-spanning segments follow: residues 69-93 (LFEVAHFIPEKPMYEQGLILLPHLA), 134-155 (LIGPETLEESFPFFGYTWKDRN), 178-200 (KALFFGGIYDTWAPGGGDVRKIT), 255-275 (KPFAWTRRAFVWSGEAYLSYS), and 291-312 (WFNNTAYPSEFYGPTGPEASQA). E367 provides a ligand contact to [CaMn4O5] cluster. A helical transmembrane segment spans residues 447–471 (RARAAAAGFEKGIDRDLEPVLFMTP).

The protein belongs to the PsbB/PsbC family. PsbC subfamily. In terms of assembly, PSII is composed of 1 copy each of membrane proteins PsbA, PsbB, PsbC, PsbD, PsbE, PsbF, PsbH, PsbI, PsbJ, PsbK, PsbL, PsbM, PsbT, PsbX, PsbY, PsbZ, Psb30/Ycf12, at least 3 peripheral proteins of the oxygen-evolving complex and a large number of cofactors. It forms dimeric complexes. Requires Binds multiple chlorophylls and provides some of the ligands for the Ca-4Mn-5O cluster of the oxygen-evolving complex. It may also provide a ligand for a Cl- that is required for oxygen evolution. PSII binds additional chlorophylls, carotenoids and specific lipids. as cofactor.

The protein localises to the plastid. It is found in the chloroplast thylakoid membrane. Its function is as follows. One of the components of the core complex of photosystem II (PSII). It binds chlorophyll and helps catalyze the primary light-induced photochemical processes of PSII. PSII is a light-driven water:plastoquinone oxidoreductase, using light energy to abstract electrons from H(2)O, generating O(2) and a proton gradient subsequently used for ATP formation. In Gnetum parvifolium (Small-leaved jointfir), this protein is Photosystem II CP43 reaction center protein.